The sequence spans 336 residues: MYRGLFLISEAVISRIEKKVLSGGKILFAEACDLALHCARADLDRLLALARQVGSLHHGKSIDLCSIVNARSGRCSEDCKFCAQSSHYSTGVDSYALVDPDYVLALAKQNEAYGVSRFSLVTAGRAVSPAFLREVASIYRRLGEETSLAPCASMGLLEPETAEMLVEMGVRRYHCNLETSASFFSEVCTSHTWQDKVATIEHARRAGLEVCSGGIIGLGESMEQRIELAFELRDLEVLSIPLNILNPIANTPFADLPALTEREILITFALFRLINPRAIVRTAGGRNLLAGQQKKLFLAGANGAIVGDYLTTSGDGLKKDIDMFLNLGFSIGSREK.

A Radical SAM core domain is found at 57-286 (HHGKSIDLCS…RAIVRTAGGR (230 aa)). Residues C75, C79, and C82 each contribute to the [4Fe-4S] cluster site. [2Fe-2S] cluster-binding residues include S119, C151, C211, and R281.

It belongs to the radical SAM superfamily. Biotin synthase family. As to quaternary structure, homodimer. [4Fe-4S] cluster is required as a cofactor. [2Fe-2S] cluster serves as cofactor.

It carries out the reaction (4R,5S)-dethiobiotin + (sulfur carrier)-SH + 2 reduced [2Fe-2S]-[ferredoxin] + 2 S-adenosyl-L-methionine = (sulfur carrier)-H + biotin + 2 5'-deoxyadenosine + 2 L-methionine + 2 oxidized [2Fe-2S]-[ferredoxin]. It functions in the pathway cofactor biosynthesis; biotin biosynthesis; biotin from 7,8-diaminononanoate: step 2/2. In terms of biological role, catalyzes the conversion of dethiobiotin (DTB) to biotin by the insertion of a sulfur atom into dethiobiotin via a radical-based mechanism. The polypeptide is Biotin synthase (Desulfotalea psychrophila (strain LSv54 / DSM 12343)).